Consider the following 482-residue polypeptide: Caspase-8 (482 aa).

A propeptide spanning residues 1-218 is cleaved from the precursor; sequence MDFHSCLYDI…DMWDSPGEQE (218 aa). DED domains lie at 2-80 and 100-177; these read DFHS…RVLK and AYRV…RIDD. S188 and S213 each carry phosphoserine. H319 is a catalytic residue. A Phosphotyrosine modification is found at Y336. C362 is an active-site residue. Positions 379–388 are excised as a propeptide; sequence LEQEHVLEED. Residue S390 is modified to Phosphoserine; by CDK1.

Belongs to the peptidase C14A family. As to quaternary structure, heterotetramer that consists of two anti-parallel arranged heterodimers, each one formed by a 18 kDa (p18) and a 10 kDa (p10) subunit. Component of the death-induced signaling complex (DISC) composed of cell surface receptor FAS/CD95 or TNFRSF1A, adapter protein FADD and the CASP8 protease; recruitment of CASP8 to the complex is required for processing of CASP8 into the p18 and p10 subunits. Component of the AIM2 PANoptosome complex, a multiprotein complex that drives inflammatory cell death (PANoptosis). Interacts with CFLAR and PEA15. Interacts with RFFL and RNF34; negatively regulate CASP8 through proteasomal degradation. Interacts with TNFAIP8L2. Interacts with CASP8AP2. Interacts with NOL3; decreases CASP8 activity in a mitochondria localization- and phosphorylation-dependent manner and this interaction is dissociated by calcium. Interacts with UBR2. Interacts with RIPK1. Interacts with stimulated TNFRSF10B; this interaction is followed by CASP8 proteolytic cleavage and activation. In terms of processing, generation of the subunits requires association with the death-inducing signaling complex (DISC), whereas additional processing is likely due to the autocatalytic activity of the activated protease. GZMB and CASP10 can be involved in these processing events. Phosphorylation on Ser-389 during mitosis by CDK1 inhibits activation by proteolysis and prevents apoptosis. This phosphorylation occurs in cancer cell lines, as well as in primary breast tissues and lymphocytes.

Its subcellular location is the cytoplasm. The protein localises to the nucleus. The catalysed reaction is Strict requirement for Asp at position P1 and has a preferred cleavage sequence of (Leu/Asp/Val)-Glu-Thr-Asp-|-(Gly/Ser/Ala).. With respect to regulation, CASP8 activity is restricted by RIPK1. Functionally, thiol protease that plays a key role in programmed cell death by acting as a molecular switch for apoptosis, necroptosis and pyroptosis, and is required to prevent tissue damage during embryonic development and adulthood. Initiator protease that induces extrinsic apoptosis by mediating cleavage and activation of effector caspases responsible for FAS/CD95-mediated and TNFRSF1A-induced cell death. Cleaves and activates effector caspases CASP3, CASP4, CASP6, CASP7, CASP9 and CASP10. Binding to the adapter molecule FADD recruits it to either receptor FAS/CD95 or TNFRSF1A. The resulting aggregate called the death-inducing signaling complex (DISC) performs CASP8 proteolytic activation. The active dimeric enzyme is then liberated from the DISC and free to activate downstream apoptotic proteases. Proteolytic fragments of the N-terminal propeptide (termed CAP3, CAP5 and CAP6) are likely retained in the DISC. In addition to extrinsic apoptosis, also acts as a negative regulator of necroptosis: acts by cleaving RIPK1 at 'Asp-325', which is crucial to inhibit RIPK1 kinase activity, limiting TNF-induced apoptosis, necroptosis and inflammatory response. Also able to initiate pyroptosis by mediating cleavage and activation of gasdermin-C and -D (GSDMC and GSDMD, respectively): gasdermin cleavage promotes release of the N-terminal moiety that binds to membranes and forms pores, triggering pyroptosis. Initiates pyroptosis following inactivation of MAP3K7/TAK1. Also acts as a regulator of innate immunity by mediating cleavage and inactivation of N4BP1 downstream of TLR3 or TLR4, thereby promoting cytokine production. May participate in the Granzyme B (GZMB) cell death pathways. Cleaves PARP1 and PARP2. This Rattus norvegicus (Rat) protein is Caspase-8.